The following is a 218-amino-acid chain: Thyroid hormone receptor alpha (218 aa).

Residues 1–215 (PEDIGQSPGV…PPLFLEVFED (215 aa)) enclose the NR LBD domain. 3,3',5-triiodo-L-thyronine is bound by residues R36 and S85.

It belongs to the nuclear hormone receptor family. NR1 subfamily.

The protein resides in the nucleus. In terms of biological role, nuclear hormone receptor that can act as a repressor or activator of transcription. High affinity receptor for thyroid hormones, including triiodothyronine and thyroxine. The polypeptide is Thyroid hormone receptor alpha (thra) (Oncorhynchus mykiss (Rainbow trout)).